Reading from the N-terminus, the 231-residue chain is Probable methylthioribulose-1-phosphate dehydratase (231 aa).

Residue C90 coordinates substrate. Residues H108 and H110 each coordinate Zn(2+). The active-site Proton donor/acceptor is the E132. Position 188 (H188) interacts with Zn(2+).

This sequence belongs to the aldolase class II family. MtnB subfamily. Zn(2+) serves as cofactor.

It is found in the cytoplasm. It carries out the reaction 5-(methylsulfanyl)-D-ribulose 1-phosphate = 5-methylsulfanyl-2,3-dioxopentyl phosphate + H2O. The protein operates within amino-acid biosynthesis; L-methionine biosynthesis via salvage pathway; L-methionine from S-methyl-5-thio-alpha-D-ribose 1-phosphate: step 2/6. Functionally, catalyzes the dehydration of methylthioribulose-1-phosphate (MTRu-1-P) into 2,3-diketo-5-methylthiopentyl-1-phosphate (DK-MTP-1-P). The chain is Probable methylthioribulose-1-phosphate dehydratase from Anopheles gambiae (African malaria mosquito).